A 224-amino-acid polypeptide reads, in one-letter code: ATP-dependent dethiobiotin synthetase BioD (224 aa).

ATP is bound at residue 14 to 19; it reads GIGKTV. Thr18 lines the Mg(2+) pocket. Lys39 is an active-site residue. A substrate-binding site is contributed by Ser43. ATP is bound by residues Asp56, 117–120, and 177–178; these read EGVG and NE. Mg(2+)-binding residues include Asp56 and Glu117.

Belongs to the dethiobiotin synthetase family. In terms of assembly, homodimer. It depends on Mg(2+) as a cofactor.

It localises to the cytoplasm. The enzyme catalyses (7R,8S)-7,8-diammoniononanoate + CO2 + ATP = (4R,5S)-dethiobiotin + ADP + phosphate + 3 H(+). Its pathway is cofactor biosynthesis; biotin biosynthesis; biotin from 7,8-diaminononanoate: step 1/2. Functionally, catalyzes a mechanistically unusual reaction, the ATP-dependent insertion of CO2 between the N7 and N8 nitrogen atoms of 7,8-diaminopelargonic acid (DAPA, also called 7,8-diammoniononanoate) to form a ureido ring. This chain is ATP-dependent dethiobiotin synthetase BioD, found in Xanthomonas campestris pv. campestris (strain 8004).